Here is a 132-residue protein sequence, read N- to C-terminus: S-adenosylmethionine decarboxylase proenzyme (132 aa).

Catalysis depends on serine 65, which acts as the Schiff-base intermediate with substrate; via pyruvic acid. Serine 65 carries the pyruvic acid (Ser); by autocatalysis modification. The active-site Proton acceptor; for processing activity is the histidine 70. Catalysis depends on cysteine 85, which acts as the Proton donor; for catalytic activity.

This sequence belongs to the prokaryotic AdoMetDC family. Type 1 subfamily. Heterotetramer of two alpha and two beta chains arranged as a dimer of alpha/beta heterodimers. Pyruvate is required as a cofactor. Post-translationally, is synthesized initially as an inactive proenzyme. Formation of the active enzyme involves a self-maturation process in which the active site pyruvoyl group is generated from an internal serine residue via an autocatalytic post-translational modification. Two non-identical subunits are generated from the proenzyme in this reaction, and the pyruvate is formed at the N-terminus of the alpha chain, which is derived from the carboxyl end of the proenzyme. The post-translation cleavage follows an unusual pathway, termed non-hydrolytic serinolysis, in which the side chain hydroxyl group of the serine supplies its oxygen atom to form the C-terminus of the beta chain, while the remainder of the serine residue undergoes an oxidative deamination to produce ammonia and the pyruvoyl group blocking the N-terminus of the alpha chain.

It carries out the reaction S-adenosyl-L-methionine + H(+) = S-adenosyl 3-(methylsulfanyl)propylamine + CO2. Its pathway is amine and polyamine biosynthesis; S-adenosylmethioninamine biosynthesis; S-adenosylmethioninamine from S-adenosyl-L-methionine: step 1/1. Functionally, catalyzes the decarboxylation of S-adenosylmethionine to S-adenosylmethioninamine (dcAdoMet), the propylamine donor required for the synthesis of the polyamines spermine and spermidine from the diamine putrescine. The chain is S-adenosylmethionine decarboxylase proenzyme from Symbiobacterium thermophilum (strain DSM 24528 / JCM 14929 / IAM 14863 / T).